The primary structure comprises 258 residues: Axonemal dynein light intermediate polypeptide 1 (258 aa).

Disordered stretches follow at residues Met-1 to Asp-60 and Val-207 to Lys-231. The segment covering Ser-34 to Ala-44 has biased composition (low complexity). Residues Met-176 to Ala-255 are a coiled coil.

This sequence belongs to the inner dynein arm light chain family. Interacts with CFAP45. Interacts with DYNC1H1. Expressed in many tissues. A smaller 0.9 kb and a larger 2.5 kb transcripts were detected at the highest level in the testis, at medium levels in the prostate, heart, liver, lung and pancreas, at low levels in the ovary, skeletal muscle and small intestine. Not detected in spleen, colon epithelium, thymus or peripheral blood leukocytes. The 0.9 kb transcript is expressed at a 20-fold higher level than the 2.5 kb transcript in the testis. Expressed in spermatozoa and airway epithelial cells (at protein level).

The protein localises to the cell projection. The protein resides in the cilium. It is found in the flagellum. Its subcellular location is the dynein axonemal particle. It localises to the cytoplasm. Functionally, involved in sperm flagellum assembly. This is Axonemal dynein light intermediate polypeptide 1 from Homo sapiens (Human).